We begin with the raw amino-acid sequence, 144 residues long: Snaclec trimecetin subunit beta (144 aa).

A signal peptide spans Met1–Ala23. Cystine bridges form between Cys25-Cys36, Cys53-Cys142, and Cys119-Cys134. Residues Phe32 to Lys143 enclose the C-type lectin domain.

The protein belongs to the snaclec family. As to quaternary structure, heterodimer of subunits alpha and beta; disulfide-linked. In terms of tissue distribution, expressed by the venom gland.

It localises to the secreted. Snaclec that induces platelet aggregation in either human platelet rich plasma (PRP) or washed platelet suspensions. It causes aggregation in a dose-dependent manner even in the absence of various platelet agonists such as ADP or von Willebrand factor (vWF). Interestingly, it does not induce aggregation in rabbit PRP. A monoclonal antibody against the platelet GPIb receptor blocks the aggregation induced by trimecetin, suggesting that it acts by binding to GPIb (GP1BA/GP1BB). The sequence is that of Snaclec trimecetin subunit beta from Protobothrops mucrosquamatus (Taiwan habu).